The following is a 310-amino-acid chain: Phosphoribosylaminoimidazole-succinocarboxamide synthase (310 aa).

This sequence belongs to the SAICAR synthetase family.

It catalyses the reaction 5-amino-1-(5-phospho-D-ribosyl)imidazole-4-carboxylate + L-aspartate + ATP = (2S)-2-[5-amino-1-(5-phospho-beta-D-ribosyl)imidazole-4-carboxamido]succinate + ADP + phosphate + 2 H(+). It functions in the pathway purine metabolism; IMP biosynthesis via de novo pathway; 5-amino-1-(5-phospho-D-ribosyl)imidazole-4-carboxamide from 5-amino-1-(5-phospho-D-ribosyl)imidazole-4-carboxylate: step 1/2. The protein is Phosphoribosylaminoimidazole-succinocarboxamide synthase of Xanthomonas campestris pv. campestris (strain B100).